Reading from the N-terminus, the 265-residue chain is Ribosomal RNA small subunit methyltransferase A (265 aa).

S-adenosyl-L-methionine contacts are provided by His13, Leu15, Gly40, Glu62, Asp87, and Asn106.

Belongs to the class I-like SAM-binding methyltransferase superfamily. rRNA adenine N(6)-methyltransferase family. RsmA subfamily.

Its subcellular location is the cytoplasm. The enzyme catalyses adenosine(1518)/adenosine(1519) in 16S rRNA + 4 S-adenosyl-L-methionine = N(6)-dimethyladenosine(1518)/N(6)-dimethyladenosine(1519) in 16S rRNA + 4 S-adenosyl-L-homocysteine + 4 H(+). Its function is as follows. Specifically dimethylates two adjacent adenosines (A1518 and A1519) in the loop of a conserved hairpin near the 3'-end of 16S rRNA in the 30S particle. May play a critical role in biogenesis of 30S subunits. The sequence is that of Ribosomal RNA small subunit methyltransferase A from Persephonella marina (strain DSM 14350 / EX-H1).